The sequence spans 255 residues: MQFDVVTLFPDMFRALTDWGITSRAAKQERYALRTWNPRDFTTDNYRTIDDRPYGGGPGMVMLAKPLEDAIGAAKAAQAEQGIGASRVVMMSPQGATLNHDRVMQFAAEPGLILLCGRYEAIDQRLLDRVVDEEVSLGDFVLSGGELPAMALMDAVVRQLPGVLNDSQSAVQDSFVDVLLDCPHYTRPEEYDGVRVPDVLLGGHHAEIEAWRRREALRNTLKKRPDLIVKARRNKMLSRADEAWLASLAKEESKA.

Residues Gly117 and 137-142 (LGDFVL) contribute to the S-adenosyl-L-methionine site.

It belongs to the RNA methyltransferase TrmD family. Homodimer.

Its subcellular location is the cytoplasm. It catalyses the reaction guanosine(37) in tRNA + S-adenosyl-L-methionine = N(1)-methylguanosine(37) in tRNA + S-adenosyl-L-homocysteine + H(+). In terms of biological role, specifically methylates guanosine-37 in various tRNAs. The chain is tRNA (guanine-N(1)-)-methyltransferase from Paraburkholderia phytofirmans (strain DSM 17436 / LMG 22146 / PsJN) (Burkholderia phytofirmans).